An 80-amino-acid chain; its full sequence is Raniseptin-4 (80 aa).

The signal sequence occupies residues 1 to 22; it reads MAFLKKSLFLVLFLGIVSLSIC. A propeptide spanning residues 23–49 is cleaved from the precursor; it reads EEEKREGEEEEKQEEENEELSEEELRD.

Belongs to the frog skin active peptide (FSAP) family. Dermaseptin subfamily. In terms of tissue distribution, expressed by the skin glands.

The protein localises to the secreted. Functionally, has antibacterial activity. In Boana raniceps (Chaco tree frog), this protein is Raniseptin-4.